Reading from the N-terminus, the 432-residue chain is Putative D-alanyl-D-alanine carboxypeptidase (432 aa).

A helical; Signal-anchor transmembrane segment spans residues 7 to 25 (ATVLLTFSLSAFAVEYPVL).

It belongs to the peptidase S12 family. YfeW subfamily.

The protein localises to the cell inner membrane. The enzyme catalyses Preferential cleavage: (Ac)2-L-Lys-D-Ala-|-D-Ala. Also transpeptidation of peptidyl-alanyl moieties that are N-acyl substituents of D-alanine.. The sequence is that of Putative D-alanyl-D-alanine carboxypeptidase from Salmonella typhimurium (strain LT2 / SGSC1412 / ATCC 700720).